Consider the following 242-residue polypeptide: Protein HTATIP2 (242 aa).

Ala-2 carries the post-translational modification N-acetylalanine. Residues 2-25 (ADKETLLKLREDFKMQNKSVFILG) form a required for interaction with elongation factor EEF1A1 region. Positions 27, 28, 29, 30, 52, 53, 92, 93, 143, 147, 170, and 178 each coordinate NADPH. Tyr-143 acts as the Proton acceptor in catalysis. Lys-147 is a catalytic residue.

Monomer. Forms homodimers during oxidative stress. Interacts (via N-terminus) with elongation factor EEF1A1 (via middle-region); the interaction is direct and competes with EEF1A1 binding to guanyl-nucleotide exchange factor EEF1B2, thereby inhibiting GDP for GTP exchange and reactivation of EEF1A1. Interacts with nuclear transport receptors XPO4, IPO5/RANBP5, IPO7, IPO9 and KPNB1 as well as GCN1L1/GCN1 and LRPPRC probably through their HEAT repeats. Binds NCOA5/CIA.

Represses translation by preventing reactivation of elongation factor eEF1A. May also inhibit nuclear import by competing with nuclear import substrates for binding to a subset of nuclear transport receptors. Has additionally been proposed to act as a redox sensor involved in cellular oxidative stress surveillance. May bind NADPH. The sequence is that of Protein HTATIP2 from Rattus norvegicus (Rat).